The following is a 128-amino-acid chain: Crossover junction endodeoxyribonuclease Hjc (128 aa).

A Mg(2+)-binding site is contributed by E10. The active site involves S30. Mg(2+)-binding residues include D34 and E47.

The protein belongs to the Holliday junction resolvase Hjc family. Homodimer. Mg(2+) is required as a cofactor.

It carries out the reaction Endonucleolytic cleavage at a junction such as a reciprocal single-stranded crossover between two homologous DNA duplexes (Holliday junction).. In terms of biological role, a structure-specific endonuclease that resolves Holliday junction (HJ) intermediates during genetic recombination. Cleaves 4-way DNA junctions introducing paired nicks in opposing strands, leaving a 5'-terminal phosphate and a 3'-terminal hydroxyl group that are subsequently ligated to produce recombinant products. The protein is Crossover junction endodeoxyribonuclease Hjc of Thermococcus kodakarensis (strain ATCC BAA-918 / JCM 12380 / KOD1) (Pyrococcus kodakaraensis (strain KOD1)).